Here is a 172-residue protein sequence, read N- to C-terminus: MDIKSLIRNIPDFPKPGIVFRDITTLLGHPEGLRYTIDTLTQKCIELNLRPDYVIGMESRGFLFGVPLAYQLGAGFIPVRKPGKLPAAVHTIEYDLEYGSDKLEIHQDAVADHHRVLIVDDLIATGGTARATADLLAKIGCEVLGFAFIIELKDLGGRQKLPDLPIITLVDY.

The protein belongs to the purine/pyrimidine phosphoribosyltransferase family. Homodimer.

Its subcellular location is the cytoplasm. The catalysed reaction is AMP + diphosphate = 5-phospho-alpha-D-ribose 1-diphosphate + adenine. It participates in purine metabolism; AMP biosynthesis via salvage pathway; AMP from adenine: step 1/1. Its function is as follows. Catalyzes a salvage reaction resulting in the formation of AMP, that is energically less costly than de novo synthesis. In Gloeothece citriformis (strain PCC 7424) (Cyanothece sp. (strain PCC 7424)), this protein is Adenine phosphoribosyltransferase.